Here is a 524-residue protein sequence, read N- to C-terminus: Ribosomal protein uS12 methylthiotransferase RimO (524 aa).

Polar residues predominate over residues 20–31 (NSQTASDSTQPA). A disordered region spans residues 20–59 (NSQTASDSTQPAASAYHHKANHNQNRSIEQSAQQAAEQSL). Residues 48–58 (EQSAQQAAEQS) show a composition bias toward low complexity. Residues 67–177 (PKVGFVSLGC…VITAVSTHAP (111 aa)) form the MTTase N-terminal domain. Residues Cys76, Cys112, Cys141, Cys216, Cys220, and Cys223 each contribute to the [4Fe-4S] cluster site. Residues 202–443 (LTPSHYAYLK…MAVQQQISEQ (242 aa)) form the Radical SAM core domain. The 74-residue stretch at 446-519 (QEKVGKTMTV…EYDLFASYDA (74 aa)) folds into the TRAM domain.

It belongs to the methylthiotransferase family. RimO subfamily. The cofactor is [4Fe-4S] cluster.

It is found in the cytoplasm. It carries out the reaction L-aspartate(89)-[ribosomal protein uS12]-hydrogen + (sulfur carrier)-SH + AH2 + 2 S-adenosyl-L-methionine = 3-methylsulfanyl-L-aspartate(89)-[ribosomal protein uS12]-hydrogen + (sulfur carrier)-H + 5'-deoxyadenosine + L-methionine + A + S-adenosyl-L-homocysteine + 2 H(+). Its function is as follows. Catalyzes the methylthiolation of an aspartic acid residue of ribosomal protein uS12. The protein is Ribosomal protein uS12 methylthiotransferase RimO of Psychrobacter sp. (strain PRwf-1).